The chain runs to 122 residues: Beta-2-microglobulin (122 aa).

Residues 1 to 23 (MFLRSTFVAALVACLAYIHLGDA) form the signal peptide. Positions 28-117 (PKVQIYSRNV…STLREATRFT (90 aa)) constitute an Ig-like C1-type domain. The cysteines at positions 48 and 103 are disulfide-linked.

This sequence belongs to the beta-2-microglobulin family. In terms of assembly, heterodimer of an alpha chain and a beta chain. Beta-2-microglobulin is the beta-chain of major histocompatibility complex class I molecules.

The protein resides in the secreted. Its function is as follows. Component of the class I major histocompatibility complex (MHC). Involved in the presentation of peptide antigens to the immune system. This is Beta-2-microglobulin (b2m) from Acipenser baerii (Siberian sturgeon).